A 144-amino-acid chain; its full sequence is Probable disulfide formation protein (144 aa).

Residues 10-29 traverse the membrane as a helical segment; it reads WNLLLLTWLVALISTLSALF. Cys39 and Cys42 are oxidised to a cystine. Helical transmembrane passes span 44–63 and 70–87; these read FQRA…CYRS and YALP…VHTL. A disulfide bond links Cys100 and Cys107. The chain crosses the membrane as a helical span at residues 116-138; the sequence is GVVPLPALALFAFIIIAILLIII.

Belongs to the DsbB family. BdbC subfamily.

It localises to the cell inner membrane. Its function is as follows. Required for disulfide bond formation in some proteins. In Metapseudomonas resinovorans (Pseudomonas resinovorans), this protein is Probable disulfide formation protein.